Here is a 497-residue protein sequence, read N- to C-terminus: Glycerol kinase (497 aa).

Threonine 12 is an ADP binding site. Residues threonine 12, threonine 13, and serine 14 each contribute to the ATP site. Sn-glycerol 3-phosphate is bound at residue threonine 12. Arginine 16 contributes to the ADP binding site. 4 residues coordinate sn-glycerol 3-phosphate: arginine 82, glutamate 83, tyrosine 134, and aspartate 243. Arginine 82, glutamate 83, tyrosine 134, aspartate 243, and glutamine 244 together coordinate glycerol. ADP is bound by residues threonine 265 and glycine 308. Residues threonine 265, glycine 308, glutamine 312, and glycine 409 each coordinate ATP. ADP contacts are provided by glycine 409 and asparagine 413.

It belongs to the FGGY kinase family.

It carries out the reaction glycerol + ATP = sn-glycerol 3-phosphate + ADP + H(+). It participates in polyol metabolism; glycerol degradation via glycerol kinase pathway; sn-glycerol 3-phosphate from glycerol: step 1/1. Its activity is regulated as follows. Inhibited by fructose 1,6-bisphosphate (FBP). Functionally, key enzyme in the regulation of glycerol uptake and metabolism. Catalyzes the phosphorylation of glycerol to yield sn-glycerol 3-phosphate. The sequence is that of Glycerol kinase from Oleidesulfovibrio alaskensis (strain ATCC BAA-1058 / DSM 17464 / G20) (Desulfovibrio alaskensis).